The sequence spans 74 residues: U3-agatoxin-Ao1d (74 aa).

An N-terminal signal peptide occupies residues 1–20 (MKAAISLLLLSALLFVVIEA). A propeptide spanning residues 21 to 34 (ITYEEGKELFQGER) is cleaved from the precursor. Disulfide bonds link Cys37–Cys53, Cys44–Cys58, Cys52–Cys68, and Cys60–Cys66. Residue Ser72 is modified to Serine amide.

This sequence belongs to the neurotoxin 07 (Beta/delta-agtx) family. 02 (aga-3) subfamily. In terms of tissue distribution, expressed by the venom gland.

The protein resides in the secreted. Insecticidal neurotoxin that induces an irreversible spastic paralysis when injected into insects. Modifies presynaptic voltage-gated sodium channels (Nav), causing them to open at the normal resting potential of the nerve. This leads to spontaneous release of neurotransmitter and repetitive action potentials in motor neurons. The chain is U3-agatoxin-Ao1d from Agelena orientalis (Funnel-web spider).